The chain runs to 349 residues: MAAQIDLKNITVQFGQNKAVNDVSLEINKGDIYGVIGFSGAGKSTLVRTINLLQYPSAGSVEVNGTVLFKDNKLQISKKQLQEKRRKIGMIFQNFNLLNEETVIENVAFALQHSRLSDQELEKKSLHLLELVGLKDKADFYPAQLSGGQQQRVAIARALANDPDILISDEATSALDPKTTNQILDLLYDLNKKLGLTVVLITHEMDAVKRVANKIVVMEKGKVIEKGELREVFLHPQKQLTRQFVGGALQAQHILNTYNFDKLAENAELYQLVYSINDVTKSVVADLDVSLNTKASILYGNVEVLSGEPIGTLAILLNLNELKQKEAIKFLESKNVVVTKLDKGVLTND.

Residues 5–245 (IDLKNITVQF…PQKQLTRQFV (241 aa)) form the ABC transporter domain. Residue 37-44 (GFSGAGKS) participates in ATP binding.

This sequence belongs to the ABC transporter superfamily. Methionine importer (TC 3.A.1.24) family. In terms of assembly, the complex is composed of two ATP-binding proteins (MetN), two transmembrane proteins (MetI) and a solute-binding protein (MetQ).

It localises to the cell membrane. It carries out the reaction L-methionine(out) + ATP + H2O = L-methionine(in) + ADP + phosphate + H(+). The catalysed reaction is D-methionine(out) + ATP + H2O = D-methionine(in) + ADP + phosphate + H(+). In terms of biological role, part of the ABC transporter complex MetNIQ involved in methionine import. Responsible for energy coupling to the transport system. This chain is Methionine import ATP-binding protein MetN, found in Lactobacillus johnsonii (strain CNCM I-12250 / La1 / NCC 533).